The following is a 494-amino-acid chain: Glutamyl-tRNA(Gln) amidotransferase subunit A (494 aa).

Catalysis depends on charge relay system residues Lys-79 and Ser-154. Ser-178 serves as the catalytic Acyl-ester intermediate.

Belongs to the amidase family. GatA subfamily. Heterotrimer of A, B and C subunits.

It catalyses the reaction L-glutamyl-tRNA(Gln) + L-glutamine + ATP + H2O = L-glutaminyl-tRNA(Gln) + L-glutamate + ADP + phosphate + H(+). In terms of biological role, allows the formation of correctly charged Gln-tRNA(Gln) through the transamidation of misacylated Glu-tRNA(Gln) in organisms which lack glutaminyl-tRNA synthetase. The reaction takes place in the presence of glutamine and ATP through an activated gamma-phospho-Glu-tRNA(Gln). The protein is Glutamyl-tRNA(Gln) amidotransferase subunit A of Clostridium kluyveri (strain NBRC 12016).